The sequence spans 267 residues: Large ribosomal subunit protein uL4 (267 aa).

It belongs to the universal ribosomal protein uL4 family. As to quaternary structure, part of the 50S ribosomal subunit.

Functionally, one of the primary rRNA binding proteins, this protein initially binds near the 5'-end of the 23S rRNA. It is important during the early stages of 50S assembly. It makes multiple contacts with different domains of the 23S rRNA in the assembled 50S subunit and ribosome. Forms part of the polypeptide exit tunnel. The protein is Large ribosomal subunit protein uL4 of Saccharolobus islandicus (strain Y.N.15.51 / Yellowstone #2) (Sulfolobus islandicus).